We begin with the raw amino-acid sequence, 482 residues long: MFS-type transporter traF (482 aa).

Residues Met-1–Glu-14 show a composition bias toward polar residues. The segment at Met-1–Leu-22 is disordered. 2 N-linked (GlcNAc...) asparagine glycosylation sites follow: Asn-15 and Asn-45. The next 9 helical transmembrane spans lie at Val-52–Met-72, Leu-89–Gly-109, Val-125–Phe-145, Phe-149–Leu-169, Gly-176–Val-196, Trp-209–Cys-229, Pro-275–Phe-295, Ile-312–Ile-332, and Leu-354–Thr-374. A glycan (N-linked (GlcNAc...) asparagine) is linked at Asn-376. 3 consecutive transmembrane segments (helical) span residues Leu-379 to Phe-399, Leu-427 to Trp-447, and Ala-448 to Ile-468.

It belongs to the major facilitator superfamily. CAR1 family.

It localises to the membrane. MFS-type transporter; part of the tra gene cluster that produces terrestric acid. The clavatol biosynthesis cluster cla and the terrestric acid cluster tra are both involved in the production of peniphenones and penilactones. The protein is MFS-type transporter traF of Penicillium crustosum (Blue mold fungus).